The primary structure comprises 321 residues: Phospho-N-acetylmuramoyl-pentapeptide-transferase (321 aa).

10 helical membrane passes run M1 to I21, M50 to V70, I76 to I96, F112 to V132, I140 to W160, G176 to L196, A200 to L220, V225 to M245, L250 to V270, and V300 to V320.

It belongs to the glycosyltransferase 4 family. MraY subfamily. It depends on Mg(2+) as a cofactor.

The protein resides in the cell membrane. It catalyses the reaction UDP-N-acetyl-alpha-D-muramoyl-L-alanyl-gamma-D-glutamyl-L-lysyl-D-alanyl-D-alanine + di-trans,octa-cis-undecaprenyl phosphate = Mur2Ac(oyl-L-Ala-gamma-D-Glu-L-Lys-D-Ala-D-Ala)-di-trans,octa-cis-undecaprenyl diphosphate + UMP. Its pathway is cell wall biogenesis; peptidoglycan biosynthesis. Functionally, catalyzes the initial step of the lipid cycle reactions in the biosynthesis of the cell wall peptidoglycan: transfers peptidoglycan precursor phospho-MurNAc-pentapeptide from UDP-MurNAc-pentapeptide onto the lipid carrier undecaprenyl phosphate, yielding undecaprenyl-pyrophosphoryl-MurNAc-pentapeptide, known as lipid I. In Staphylococcus epidermidis (strain ATCC 12228 / FDA PCI 1200), this protein is Phospho-N-acetylmuramoyl-pentapeptide-transferase.